The chain runs to 350 residues: GTPase Obg (350 aa).

The 159-residue stretch at 1–159 (MRFIDQTEIF…FRLHLELKLL (159 aa)) folds into the Obg domain. An OBG-type G domain is found at 160 to 328 (AEVGIIGLPN…LLQQVWEELD (169 aa)). Residues 166–173 (GLPNAGKS), 191–195 (FTTLI), 213–216 (DIPG), 280–283 (NKID), and 309–311 (SAV) contribute to the GTP site. 2 residues coordinate Mg(2+): Ser173 and Thr193.

It belongs to the TRAFAC class OBG-HflX-like GTPase superfamily. OBG GTPase family. Monomer. Mg(2+) serves as cofactor.

The protein resides in the cytoplasm. An essential GTPase which binds GTP, GDP and possibly (p)ppGpp with moderate affinity, with high nucleotide exchange rates and a fairly low GTP hydrolysis rate. Plays a role in control of the cell cycle, stress response, ribosome biogenesis and in those bacteria that undergo differentiation, in morphogenesis control. The sequence is that of GTPase Obg from Acaryochloris marina (strain MBIC 11017).